Consider the following 78-residue polypeptide: Putative Fe(2+) transport protein A (78 aa).

The protein belongs to the FeoA family.

In terms of biological role, might be involved in Fe(2+) ion uptake. This Helicobacter pylori (strain J99 / ATCC 700824) (Campylobacter pylori J99) protein is Putative Fe(2+) transport protein A.